We begin with the raw amino-acid sequence, 204 residues long: ATP-dependent Clp protease proteolytic subunit (204 aa).

Residue Ser100 is the Nucleophile of the active site. Residue His125 is part of the active site.

Belongs to the peptidase S14 family. In terms of assembly, fourteen ClpP subunits assemble into 2 heptameric rings which stack back to back to give a disk-like structure with a central cavity, resembling the structure of eukaryotic proteasomes.

It localises to the cytoplasm. The catalysed reaction is Hydrolysis of proteins to small peptides in the presence of ATP and magnesium. alpha-casein is the usual test substrate. In the absence of ATP, only oligopeptides shorter than five residues are hydrolyzed (such as succinyl-Leu-Tyr-|-NHMec, and Leu-Tyr-Leu-|-Tyr-Trp, in which cleavage of the -Tyr-|-Leu- and -Tyr-|-Trp bonds also occurs).. Its function is as follows. Cleaves peptides in various proteins in a process that requires ATP hydrolysis. Has a chymotrypsin-like activity. Plays a major role in the degradation of misfolded proteins. In Anaeromyxobacter sp. (strain Fw109-5), this protein is ATP-dependent Clp protease proteolytic subunit.